The primary structure comprises 300 residues: Hydroxyacyl-thioester dehydratase type 2, mitochondrial (300 aa).

This sequence belongs to the HTD2 family.

The protein resides in the mitochondrion. In terms of biological role, mitochondrial 3-hydroxyacyl-thioester dehydratase involved in fatty acid biosynthesis. Required for respiratory growth and for normal mitochondrial morphology. In Schizosaccharomyces pombe (strain 972 / ATCC 24843) (Fission yeast), this protein is Hydroxyacyl-thioester dehydratase type 2, mitochondrial (htd2).